Consider the following 722-residue polypeptide: Exocyst complex component 3-like protein 4 (722 aa).

Disordered stretches follow at residues 1-53 (MPSP…LGSL) and 92-131 (NDGP…KPEA). A compositionally biased stretch (basic and acidic residues) spans 34-46 (SRKEPNAHRKDGT). A Phosphoserine modification is found at serine 52. The segment covering 113-122 (GVSQQASTGA) has biased composition (polar residues). Serine 513 bears the Phosphoserine mark.

The protein belongs to the SEC6 family.

In Homo sapiens (Human), this protein is Exocyst complex component 3-like protein 4 (EXOC3L4).